A 462-amino-acid chain; its full sequence is GTPase Der (462 aa).

2 EngA-type G domains span residues 3–166 (PVIA…TTET) and 175–348 (IKIA…HSAI). GTP-binding positions include 9–16 (GRPNVGKS), 56–60 (DTGGI), 118–121 (NKTD), 181–188 (GRPNVGKS), 228–232 (DTAGV), and 293–296 (NKWD). Residues 349-433 (QSFSTPKLTR…PLKIEFKGGQ (85 aa)) form the KH-like domain.

This sequence belongs to the TRAFAC class TrmE-Era-EngA-EngB-Septin-like GTPase superfamily. EngA (Der) GTPase family. In terms of assembly, associates with the 50S ribosomal subunit.

In terms of biological role, GTPase that plays an essential role in the late steps of ribosome biogenesis. In Legionella pneumophila (strain Paris), this protein is GTPase Der.